Here is a 167-residue protein sequence, read N- to C-terminus: 2-C-methyl-D-erythritol 2,4-cyclodiphosphate synthase (167 aa).

A divalent metal cation-binding residues include aspartate 15 and histidine 17. 4-CDP-2-C-methyl-D-erythritol 2-phosphate-binding positions include aspartate 15–histidine 17 and histidine 43–serine 44. Histidine 51 is an a divalent metal cation binding site. 4-CDP-2-C-methyl-D-erythritol 2-phosphate is bound by residues aspartate 65–glycine 67, threonine 141–glutamate 144, and arginine 151.

It belongs to the IspF family. As to quaternary structure, homotrimer. The cofactor is a divalent metal cation.

It catalyses the reaction 4-CDP-2-C-methyl-D-erythritol 2-phosphate = 2-C-methyl-D-erythritol 2,4-cyclic diphosphate + CMP. The protein operates within isoprenoid biosynthesis; isopentenyl diphosphate biosynthesis via DXP pathway; isopentenyl diphosphate from 1-deoxy-D-xylulose 5-phosphate: step 4/6. Involved in the biosynthesis of isopentenyl diphosphate (IPP) and dimethylallyl diphosphate (DMAPP), two major building blocks of isoprenoid compounds. Catalyzes the conversion of 4-diphosphocytidyl-2-C-methyl-D-erythritol 2-phosphate (CDP-ME2P) to 2-C-methyl-D-erythritol 2,4-cyclodiphosphate (ME-CPP) with a corresponding release of cytidine 5-monophosphate (CMP). This is 2-C-methyl-D-erythritol 2,4-cyclodiphosphate synthase from Prochlorococcus marinus (strain MIT 9312).